A 304-amino-acid polypeptide reads, in one-letter code: uncharacterized protein (304 aa).

Residues 1–183 (MTAPNEPGAL…ARVQLSARRS (183 aa)) form a disordered region. Residues 132-166 (PTPRAPQRNPAPARPAEGGAGSRGDSAAGSSGGRS) show a composition bias toward low complexity. The next 2 helical transmembrane spans lie at 206–226 (LLLSVALFFVWMITVAFLYLV) and 265–285 (FLIGLVNIVLMTALATIGAFV).

It to M.leprae ML0007.

The protein localises to the cell membrane. This is an uncharacterized protein from Mycobacterium tuberculosis (strain ATCC 25618 / H37Rv).